Here is a 188-residue protein sequence, read N- to C-terminus: Elongation factor P (188 aa).

Belongs to the elongation factor P family.

It localises to the cytoplasm. The protein operates within protein biosynthesis; polypeptide chain elongation. Functionally, involved in peptide bond synthesis. Stimulates efficient translation and peptide-bond synthesis on native or reconstituted 70S ribosomes in vitro. Probably functions indirectly by altering the affinity of the ribosome for aminoacyl-tRNA, thus increasing their reactivity as acceptors for peptidyl transferase. The polypeptide is Elongation factor P (Chloroherpeton thalassium (strain ATCC 35110 / GB-78)).